The sequence spans 68 residues: Venom-like beta-defensin (68 aa).

Residues 1 to 24 form the signal peptide; it reads MRLLILFLAVVTLLSLAGPGSAEV. 3 disulfides stabilise this stretch: Cys33/Cys60, Cys40/Cys54, and Cys47/Cys61.

Highly expressed in intestine, liver and spleen and expressed at lower levels in brain, kidney, lung, testis and venom gland.

The protein resides in the secreted. Potent antimicrobial peptide that displays activity against S.aureus and P.aeruginosa. Does not inhibit growth of E.coli. The sequence is that of Venom-like beta-defensin from Ornithorhynchus anatinus (Duckbill platypus).